Here is a 249-residue protein sequence, read N- to C-terminus: Acetylglutamate kinase (249 aa).

Residues 42-43 (GG), arginine 64, and asparagine 155 contribute to the substrate site.

Belongs to the acetylglutamate kinase family. ArgB subfamily.

It localises to the cytoplasm. It carries out the reaction N-acetyl-L-glutamate + ATP = N-acetyl-L-glutamyl 5-phosphate + ADP. It functions in the pathway amino-acid biosynthesis; L-arginine biosynthesis; N(2)-acetyl-L-ornithine from L-glutamate: step 2/4. Its function is as follows. Catalyzes the ATP-dependent phosphorylation of N-acetyl-L-glutamate. The protein is Acetylglutamate kinase of Endomicrobium trichonymphae.